We begin with the raw amino-acid sequence, 146 residues long: Large ribosomal subunit protein uL15 (146 aa).

Positions 1–45 (MTIKLHHLRPAPGSKTERTRVGRGEGSKGKTAGRGTKGTKARKNV) are disordered. A compositionally biased stretch (basic and acidic residues) spans 15–28 (KTERTRVGRGEGSK).

The protein belongs to the universal ribosomal protein uL15 family. Part of the 50S ribosomal subunit.

Binds to the 23S rRNA. This chain is Large ribosomal subunit protein uL15, found in Mycobacteroides abscessus (strain ATCC 19977 / DSM 44196 / CCUG 20993 / CIP 104536 / JCM 13569 / NCTC 13031 / TMC 1543 / L948) (Mycobacterium abscessus).